A 201-amino-acid chain; its full sequence is Probable GTP-binding protein EngB (201 aa).

One can recognise an EngB-type G domain in the interval 21–191; it reads AAPQIILAGR…WNLLDVTAIP (171 aa). GTP is bound by residues 29–36, 56–60, 75–78, 142–145, and 168–172; these read GRSNVGKS, GKTRS, DLPG, TKSD, and ICVSS. Positions 36 and 58 each coordinate Mg(2+).

This sequence belongs to the TRAFAC class TrmE-Era-EngA-EngB-Septin-like GTPase superfamily. EngB GTPase family. Requires Mg(2+) as cofactor.

In terms of biological role, necessary for normal cell division and for the maintenance of normal septation. In Maridesulfovibrio salexigens (strain ATCC 14822 / DSM 2638 / NCIMB 8403 / VKM B-1763) (Desulfovibrio salexigens), this protein is Probable GTP-binding protein EngB.